The chain runs to 211 residues: Protein-L-isoaspartate O-methyltransferase (211 aa).

Residue serine 60 is part of the active site.

This sequence belongs to the methyltransferase superfamily. L-isoaspartyl/D-aspartyl protein methyltransferase family.

Its subcellular location is the cytoplasm. It catalyses the reaction [protein]-L-isoaspartate + S-adenosyl-L-methionine = [protein]-L-isoaspartate alpha-methyl ester + S-adenosyl-L-homocysteine. Functionally, catalyzes the methyl esterification of L-isoaspartyl residues in peptides and proteins that result from spontaneous decomposition of normal L-aspartyl and L-asparaginyl residues. It plays a role in the repair and/or degradation of damaged proteins. The chain is Protein-L-isoaspartate O-methyltransferase from Pseudomonas syringae pv. tomato (strain ATCC BAA-871 / DC3000).